The primary structure comprises 354 residues: Rhodopsin (354 aa).

Topologically, residues 1-36 are extracellular; it reads MNGTEGPYFNVPMVNTTGIVRSPYEYPQYYLVSPAA. N-linked (GlcNAc...) asparagine glycans are attached at residues N2 and N15. The helical transmembrane segment at 37-61 threads the bilayer; sequence YAALGAYMFFLILVGFPINFLTLYV. Over 62 to 73 the chain is Cytoplasmic; it reads TLEHKKLRTPLN. The helical transmembrane segment at 74 to 96 threads the bilayer; sequence YILLNLAVADLFMVFGGFTTTMY. At 97-110 the chain is on the extracellular side; that stretch reads TSMHGYFVLGRLGC. A disulfide bond links C110 and C187. The chain crosses the membrane as a helical span at residues 111-133; it reads NLEGFFATLGGEIGLWSLVVLAI. The short motif at 134–136 is the 'Ionic lock' involved in activated form stabilization element; it reads ERW. Topologically, residues 134–152 are cytoplasmic; it reads ERWVVVCKPISNFRFGENH. A helical membrane pass occupies residues 153–173; sequence AIMGLVFTWIMAASCAVPPLV. The Extracellular segment spans residues 174–202; that stretch reads GWSRYIPEGMQCSCGVDYYTRAEGFNNES. A helical transmembrane segment spans residues 203–224; it reads FVVYMFVCHFLIPLIVVFFCYG. Residues 225–252 lie on the Cytoplasmic side of the membrane; it reads RLLCAVKEAAAAQQESETTQRAEREVTR. A helical membrane pass occupies residues 253-274; sequence MVVIMVIGFLVCWLPYASVAWY. At 275-286 the chain is on the extracellular side; it reads IFTNQGSEFGPL. A helical transmembrane segment spans residues 287–308; it reads FMTIPAFFAKSSSIYNPAIYIC. K296 bears the N6-(retinylidene)lysine mark. The Cytoplasmic segment spans residues 309–354; it reads MNKQFRNCMITTLCCGKNPFEEEEGASTTASKTEASSVSSSSVSPA. 2 S-palmitoyl cysteine lipidation sites follow: C322 and C323. The tract at residues 332-354 is disordered; that stretch reads EGASTTASKTEASSVSSSSVSPA. Over residues 334–354 the composition is skewed to low complexity; that stretch reads ASTTASKTEASSVSSSSVSPA.

This sequence belongs to the G-protein coupled receptor 1 family. Opsin subfamily. In terms of processing, phosphorylated on some or all of the serine and threonine residues present in the C-terminal region. Contains one covalently linked retinal chromophore.

It is found in the membrane. It localises to the cell projection. The protein resides in the cilium. Its subcellular location is the photoreceptor outer segment. Photoreceptor required for image-forming vision at low light intensity. While most salt water fish species use retinal as chromophore, most freshwater fish use 3-dehydroretinal, or a mixture of retinal and 3-dehydroretinal. Light-induced isomerization of 11-cis to all-trans retinal triggers a conformational change that activates signaling via G-proteins. Subsequent receptor phosphorylation mediates displacement of the bound G-protein alpha subunit by arrestin and terminates signaling. The protein is Rhodopsin (rho) of Oryzias latipes (Japanese rice fish).